The following is a 2124-amino-acid chain: Genome polyprotein (2124 aa).

A lipid anchor (N-myristoyl glycine; by host) is attached at Gly-2. The segment at 873-880 (VARDLLLI) is host EIF4E binding. An SF3 helicase domain is found at 1102–1264 (VQIATYFRNF…SAATKNGKLD (163 aa)). 1130-1137 (GKPGVGKS) provides a ligand contact to ATP. Residues 1415–1437 (DKPKEEEEEPEEKKEKKTEESKE) show a composition bias toward basic and acidic residues. The segment at 1415–1446 (DKPKEEEEEPEEKKEKKTEESKEAAGPYNGPT) is disordered. Residue Tyr-1442 is modified to O-(5'-phospho-RNA)-tyrosine. Residues 1459-1648 (SPLMDMEKKI…VGTRLTARMI (190 aa)) enclose the Peptidase C3 domain. Residues His-1501, Asp-1535, and Cys-1612 each act as for protease 3C activity in the active site. The RdRp catalytic domain occupies 1893–2011 (PYLYDFDYSN…ASKFELDLVM (119 aa)). Active-site for RdRp activity residues include Asp-1899 and Asp-1997.

Belongs to the picornaviruses polyprotein family. Interacts with host EIF4E. As to quaternary structure, interacts with host IFIH1/MDA5; this interaction inhibits the induction of the IFN-beta signal pathway. In terms of processing, specific enzymatic cleavages by the viral protease in vivo yield a variety of precursors and mature proteins. The polyprotein seems to be cotranslationally cleaved at the 2A/2B junction by a ribosomal skip from one codon to the next without formation of a peptide bond. This process would release the P1-2A peptide from the translational complex. Post-translationally, during virion maturation, immature virions are rendered infectious following cleavage of VP0 into VP4 and VP2. This maturation seems to be an autocatalytic event triggered by the presence of RNA in the capsid and is followed by a conformational change of the particle. Myristoylation is required during RNA encapsidation and formation of the mature virus particle. In terms of processing, uridylylated by the polymerase and is covalently linked to the 5'-end of genomic RNA. This uridylylated form acts as a nucleotide-peptide primer for the polymerase.

It is found in the virion. The protein resides in the host cytoplasm. It localises to the host nucleus. Its subcellular location is the host nucleolus. The protein localises to the host cytoplasmic vesicle membrane. It carries out the reaction RNA(n) + a ribonucleoside 5'-triphosphate = RNA(n+1) + diphosphate. The catalysed reaction is ATP + H2O = ADP + phosphate + H(+). It catalyses the reaction Selective cleavage of Gln-|-Gly bond in the poliovirus polyprotein. In other picornavirus reactions Glu may be substituted for Gln, and Ser or Thr for Gly.. In terms of biological role, forms an icosahedral capsid of pseudo T=3 symmetry with capsid proteins VP2 and VP3. Together they form an icosahedral capsid composed of 60 copies of each VP1, VP2, and VP3, with a diameter of approximately 300 Angstroms. VP4 lies on the inner surface of the protein shell formed by VP1, VP2 and VP3. All the three latter proteins contain a beta-sheet structure called beta-barrel jelly roll. VP1 is situated at the 12 fivefold axes, whereas VP2 and VP3 are located at the quasi-sixfold axes. Functionally, lies on the inner surface of the capsid shell. After binding to the host receptor, the capsid undergoes conformational changes. Capsid protein VP4 is released, capsid protein VP1 N-terminus is externalized, and together, they shape a pore in the host membrane through which the viral genome is translocated into the host cell cytoplasm. After genome has been released, the channel shrinks. Its function is as follows. VP0 precursor is a component of immature procapsids. Involved in host translation shutoff by inhibiting cap-dependent mRNA translation. Nuclear localization is required for this function. The resulting inhibition of cellular protein synthesis serves to ensure maximal viral gene expression and to evade host immune response. In terms of biological role, affects membrane integrity and causes an increase in membrane permeability. Functionally, associates with and induces structural rearrangements of intracellular membranes. It displays RNA-binding, nucleotide binding and NTPase activities. Interacts with IFIH1/MDA5 to inhibit the induction of the IFN-beta signal pathway. Its function is as follows. Serves as membrane anchor via its hydrophobic domain. Forms a primer, VPg-pU, which is utilized by the polymerase for the initiation of RNA chains. In terms of biological role, cysteine protease that generates mature viral proteins from the precursor polyprotein. In addition to its proteolytic activity, it binds to viral RNA, and thus influences viral genome replication. RNA and substrate cooperatively bind to the protease. Cleaves host PABP1, this cleavage is important for viral replication. Cleaves host TANK and disrupts the TANK-TBK1-IKKepsilon-IRF3 complex, thereby inhibiting the induction of the IFN-beta signal pathway. Functionally, replicates the genomic and antigenomic RNAs by recognizing replications specific signals. Performs VPg uridylylation. The polypeptide is Genome polyprotein (Cosavirus A (isolate Human/Pakistan/0553/-) (HCoSV-A)).